The sequence spans 513 residues: MNEEQRKSTSIDILAERDKKTKDYSKYFEHVYQPPSLKEARKRGKEEVNYNDDFQIDEKYRNMGQGKTFLIKTYGCQMNAHDTEVMAGILGALGYTPTEDINHADVILINTCAIRENAENKVFSEIGNLKHLKKEKPETVIGVCGCMSQEESVVNKILKSYQNVDMIFGTHNIHRLPEILEEAYLSKAMVVEVWSKEGDVIENLPKVREGNIKAWVNIMYGCDKFCTYCIVPFTRGKERSRRPEDIIDEVRDLARQGYKEITLLGQNVNAYGKDIDGLAYGLGDLLEDISKIDIPRVRFTTSHPWDFTDRMIEVIANGGNIVPHVHLPVQSGNNAVLKIMGRKYTRESYLDLVNRIKTHIPNVALTTDIIVGYPNETDEQFEETLTLYDEVEFEHAYTYIYSQRDGTPAAKMNDNVPLDVKKDRLQQLNKKVACYSERAMQQYEGQTVQVLCEGVSKKDDTVLSGYTSKNKLVNFKAPKSMIGKIVNVYIDEAKQFSLNGTFISVNDKTVVTQ.

An MTTase N-terminal domain is found at Lys-67 to Leu-185. Residues Cys-76, Cys-112, Cys-146, Cys-222, Cys-226, and Cys-229 each contribute to the [4Fe-4S] cluster site. A Radical SAM core domain is found at Arg-208–Arg-438. The TRAM domain maps to Gln-441 to Ser-504.

It belongs to the methylthiotransferase family. MiaB subfamily. As to quaternary structure, monomer. It depends on [4Fe-4S] cluster as a cofactor.

Its subcellular location is the cytoplasm. The enzyme catalyses N(6)-dimethylallyladenosine(37) in tRNA + (sulfur carrier)-SH + AH2 + 2 S-adenosyl-L-methionine = 2-methylsulfanyl-N(6)-dimethylallyladenosine(37) in tRNA + (sulfur carrier)-H + 5'-deoxyadenosine + L-methionine + A + S-adenosyl-L-homocysteine + 2 H(+). Functionally, catalyzes the methylthiolation of N6-(dimethylallyl)adenosine (i(6)A), leading to the formation of 2-methylthio-N6-(dimethylallyl)adenosine (ms(2)i(6)A) at position 37 in tRNAs that read codons beginning with uridine. This Staphylococcus saprophyticus subsp. saprophyticus (strain ATCC 15305 / DSM 20229 / NCIMB 8711 / NCTC 7292 / S-41) protein is tRNA-2-methylthio-N(6)-dimethylallyladenosine synthase.